The chain runs to 648 residues: Pesticidal crystal protein Cry19Aa (648 aa).

Belongs to the delta endotoxin family.

Promotes colloidosmotic lysis by binding to the midgut epithelial cells of mosquitos. In Bacillus thuringiensis subsp. jegathesan, this protein is Pesticidal crystal protein Cry19Aa (cry19Aa).